Here is a 307-residue protein sequence, read N- to C-terminus: UPF0749 protein MT1871 (307 aa).

The first 23 residues, 1–23, serve as a signal peptide directing secretion; it reads MAESDRLLGGYDPNAGYSAHAGA. 2 consecutive transmembrane segments (helical) span residues 67–87 and 152–172; these read VSWM…AAAV and VLSL…VTVT.

The protein belongs to the UPF0749 family.

The protein localises to the cell membrane. The sequence is that of UPF0749 protein MT1871 from Mycobacterium tuberculosis (strain CDC 1551 / Oshkosh).